A 543-amino-acid polypeptide reads, in one-letter code: Steroid receptor seven-up, isoforms B/C (543 aa).

Residues 38–191 form a disordered region; the sequence is PPHSAWHEPP…HSQSSNSGSQ (154 aa). Over residues 56-68 the composition is skewed to low complexity; sequence AASAGPGTTTGSV. Residues 83–101 are compositionally biased toward polar residues; that stretch reads QQSAVIKQDLSCPSLNQAG. A compositionally biased stretch (gly residues) spans 122–141; the sequence is GSAGGHHSGSGSGSGSGVNP. Residues 158 to 170 are compositionally biased toward polar residues; that stretch reads MLTSIKGQPTGCG. Positions 171–191 are enriched in low complexity; the sequence is STTPSSQANSSHSQSSNSGSQ. A DNA-binding region (nuclear receptor) is located at residues 197 to 272; it reads NIECVVCGDK…MGMRREAVQR (76 aa). 2 consecutive NR C4-type zinc fingers follow at residues 200–220 and 236–260; these read CVVCGDKSSGKHYGQFTCEGC and CRGSRNCPIDQHHRNQCQYCRLKKC. The region spanning 307–532 is the NR LBD domain; that stretch reads YLSSYISLLL…TLIRDMLLSG (226 aa).

It belongs to the nuclear hormone receptor family. NR2 subfamily. As to expression, expressed in several embryonic tissues; dorsal vessel, oenocyte and fat body. CNS expression is dynamic and confined to temporally restricted subsections of the NB lineage; expressed in many NB and GMCs, but only a small number of neurons.

It is found in the nucleus. In terms of biological role, receptor that is required in photoreceptors R1, R3, R4 and R6 during eye development; generation of the ganglion mother cell-2 (GMC-2) fate in the nb7-3 lineage, coinciding with the transition in the expression of HB to KR in the neuroblasts (NBs). This Drosophila melanogaster (Fruit fly) protein is Steroid receptor seven-up, isoforms B/C (svp).